The primary structure comprises 205 residues: Protein phosphatase inhibitor 2 family member C (205 aa).

Disordered regions lie at residues 1–51 and 70–114; these read MSAS…DESS and EPGT…DHSC. Residues 12–17 form a required for binding PPP1CC region; it reads KGILKN. The segment covering 19–34 has biased composition (low complexity); the sequence is SSSGSSVATSGQQSGG. The required for binding PPP1CC stretch occupies residues 43-55; that stretch reads KSQKWDESSILAT. A compositionally biased stretch (basic and acidic residues) spans 84–102; that stretch reads DSVRDVEGEDSVRGVEGKE. Residues 147-150 form a required for binding PPP1CC catalytic center, displacing metal ions and inhibition of PPP1CC catalytic activity region; the sequence is HYNE. The tract at residues 165-205 is disordered; sequence LQSEDDENEERPQATNEEKTAAEESEEAPLSGGLQTQSCDP. The segment covering 174 to 186 has biased composition (basic and acidic residues); the sequence is ERPQATNEEKTAA.

It belongs to the protein phosphatase inhibitor 2 family.

Functions as a protein phosphatase inhibitor. It inhibits activity of the catalytic subunit of PP1 and weakly inhibits the activity of myosin-associated phosphates. This Macaca fascicularis (Crab-eating macaque) protein is Protein phosphatase inhibitor 2 family member C (PPP1R2C).